Reading from the N-terminus, the 213-residue chain is Holliday junction branch migration complex subunit RuvA (213 aa).

The interval 1 to 69 (MISYLKGIVA…EEIPLLYGFS (69 aa)) is domain I. The interval 70–148 (SPAERDLFRH…EWRKSAGFFV (79 aa)) is domain II. The interval 149–158 (ATEGPAPGIL) is flexible linker. Residues 158 to 213 (LEEVQMTLFALGYTAHEVSHALHVVSEDIGLPKDAYVEDWIKQAIAHLSSSEQVSH) are domain III.

It belongs to the RuvA family. As to quaternary structure, homotetramer. Forms an RuvA(8)-RuvB(12)-Holliday junction (HJ) complex. HJ DNA is sandwiched between 2 RuvA tetramers; dsDNA enters through RuvA and exits via RuvB. An RuvB hexamer assembles on each DNA strand where it exits the tetramer. Each RuvB hexamer is contacted by two RuvA subunits (via domain III) on 2 adjacent RuvB subunits; this complex drives branch migration. In the full resolvosome a probable DNA-RuvA(4)-RuvB(12)-RuvC(2) complex forms which resolves the HJ.

It localises to the cytoplasm. The RuvA-RuvB-RuvC complex processes Holliday junction (HJ) DNA during genetic recombination and DNA repair, while the RuvA-RuvB complex plays an important role in the rescue of blocked DNA replication forks via replication fork reversal (RFR). RuvA specifically binds to HJ cruciform DNA, conferring on it an open structure. The RuvB hexamer acts as an ATP-dependent pump, pulling dsDNA into and through the RuvAB complex. HJ branch migration allows RuvC to scan DNA until it finds its consensus sequence, where it cleaves and resolves the cruciform DNA. The chain is Holliday junction branch migration complex subunit RuvA from Nostoc sp. (strain PCC 7120 / SAG 25.82 / UTEX 2576).